Reading from the N-terminus, the 212-residue chain is Peptide methionine sulfoxide reductase MsrA (212 aa).

Cys-52 is an active-site residue.

It belongs to the MsrA Met sulfoxide reductase family.

The enzyme catalyses L-methionyl-[protein] + [thioredoxin]-disulfide + H2O = L-methionyl-(S)-S-oxide-[protein] + [thioredoxin]-dithiol. The catalysed reaction is [thioredoxin]-disulfide + L-methionine + H2O = L-methionine (S)-S-oxide + [thioredoxin]-dithiol. In terms of biological role, has an important function as a repair enzyme for proteins that have been inactivated by oxidation. Catalyzes the reversible oxidation-reduction of methionine sulfoxide in proteins to methionine. This chain is Peptide methionine sulfoxide reductase MsrA, found in Salmonella schwarzengrund (strain CVM19633).